An 83-amino-acid polypeptide reads, in one-letter code: Toxin TdNa3 (83 aa).

The first 20 residues, 1 to 20 (MKGMIMLISCLMLIDVVVES), serve as a signal peptide directing secretion. The LCN-type CS-alpha/beta domain occupies 21-82 (KNGYIIEPKG…IFDYYNNKCG (62 aa)). Intrachain disulfides connect Cys31–Cys81, Cys35–Cys57, Cys43–Cys62, and Cys47–Cys64. The residue at position 81 (Cys81) is a Cysteine amide.

It belongs to the long (4 C-C) scorpion toxin superfamily. Sodium channel inhibitor family. Beta subfamily. Expressed by the venom gland.

It localises to the secreted. Its function is as follows. Inhibits the sodium currents (Nav) in an apparent irreversible manner. Produces small depolarization and induces repetitive firing in squid axons. Is specific for arthropods (crickets, triatomides, crabs and squids), but is non-toxic to mice. The sequence is that of Toxin TdNa3 from Tityus discrepans (Venezuelan scorpion).